The following is a 301-amino-acid chain: Ornithine carbamoyltransferase (301 aa).

Carbamoyl phosphate-binding positions include arginine 107 and 134 to 137; that span reads HPLQ. Residues asparagine 165, aspartate 220, and 224–225 each bind L-ornithine; that span reads SM. Carbamoyl phosphate contacts are provided by residues 260-261 and arginine 288; that span reads CL.

This sequence belongs to the aspartate/ornithine carbamoyltransferase superfamily. OTCase family. Homotrimer.

The protein localises to the cytoplasm. It carries out the reaction carbamoyl phosphate + L-ornithine = L-citrulline + phosphate + H(+). It functions in the pathway amino-acid biosynthesis; L-arginine biosynthesis; L-arginine from L-ornithine and carbamoyl phosphate: step 1/3. Inhibited by delta-N-phosphonoacetyl-L-ornithine. In terms of biological role, reversibly catalyzes the transfer of the carbamoyl group from carbamoyl phosphate (CP) to the N(epsilon) atom of ornithine (ORN) to produce L-citrulline, which is a substrate for argininosuccinate synthetase, the enzyme involved in the final step in arginine biosynthesis. This Thermus thermophilus (strain ATCC BAA-163 / DSM 7039 / HB27) protein is Ornithine carbamoyltransferase.